Here is a 192-residue protein sequence, read N- to C-terminus: uncharacterized protein (192 aa).

A disordered region spans residues 168–192 (PLWRKSEAGSRKARTSNSGGPTKRA). A compositionally biased stretch (polar residues) spans 182-192 (TSNSGGPTKRA).

The protein to A.xylinum IS1268 ORFA.

This is an uncharacterized protein from Sinorhizobium fredii (strain NBRC 101917 / NGR234).